A 566-amino-acid polypeptide reads, in one-letter code: MLRVNSKSSIKTFVRHLSHKELKFGVEGRAALLKGVNTLADAVSVTLGPKGRNVLIEQQFGAPKITKDGVTVAKAITLEDKFEDLGAKLLQEVASKTNESAGDGTTSATVLGRSIFTESVKNVAAGCNPMDLRRGSQAAVEAVIEFLQKNKKEITTSEEIAQVATISANGDKHIGDLLANAMEKVGKEGVITVKEGKTLEDELEVTEGMKFDRGFISPYFITNTKTGKVEFENPLILLSEKKISSIQDILPSLELSNQTRRPLLIIAEDVDGEALAACILNKLRGQVQVCAVKAPGFGDNRKNTLGDIAILSGGTVFTEELDIKPENATIEQLGSAGAVTITKEDTVLLNGEGSKDNLEARCEQIRSVIADVHTTEYEKEKLQERLAKLSGGVAVIKVGGASEVEVGEKKDRYEDALNATRAAVEEGILPGGGTALIKATKILDEVKEKAVNFDQKLGVDTIRAAITKPAKRIIENAGEEGAVIVGKIYDEPEFNKGYDSQKGEFTDMIAAGIIDPFKVVKNGLVDASGVASLLATTECAIVDAPQPKGSPAAPPAPGMGGMPGMF.

A disordered region spans residues glutamine 546–phenylalanine 566.

The protein belongs to the chaperonin (HSP60) family.

It is found in the mitochondrion. Its function is as follows. May participate in assembly and/or disassembly of proteins imported into the mitochondrion. HSP60 are ATPases and have affinity for unfolded proteins. This is Heat shock protein 60, mitochondrial (HSP60) from Candida albicans (strain SC5314 / ATCC MYA-2876) (Yeast).